Consider the following 975-residue polypeptide: Aminopeptidase N (975 aa).

The Cytoplasmic segment spans residues 1 to 11 (MAKGFYISKAL). Residues 12–32 (GILAIVLGIAAVSTIIALSVV) traverse the membrane as a helical; Signal-anchor for type II membrane protein segment. A cytosolic Ser/Thr-rich junction region spans residues 33–74 (YAQEKNKNAESSPVSSPVSSPVSSPVSPTNPSTTAATTLAQS). Over 33–975 (YAQEKNKNAE…VLQWFRENSQ (943 aa)) the chain is Extracellular. The disordered stretch occupies residues 41–68 (AESSPVSSPVSSPVSSPVSPTNPSTTAA). Positions 43–59 (SSPVSSPVSSPVSSPVS) are enriched in low complexity. Residues 75-975 (KPWNHYRLPK…VLQWFRENSQ (901 aa)) are metalloprotease. The N-linked (GlcNAc...) asparagine glycan is linked to Asn134. Sulfotyrosine is present on Tyr182. Asn240 and Asn271 each carry an N-linked (GlcNAc...) asparagine glycan. Residue 358–362 (GAMEN) coordinates substrate. Zn(2+) is bound at residue His394. Catalysis depends on Glu395, which acts as the Proton acceptor. Zn(2+) contacts are provided by His398 and Glu417. Residues Tyr425 and Tyr430 each carry the sulfotyrosine modification. Residues Asn533, Asn580, Asn633, Asn689, and Asn747 are each glycosylated (N-linked (GlcNAc...) asparagine). Intrachain disulfides connect Cys769–Cys776 and Cys806–Cys842. A glycan (N-linked (GlcNAc...) asparagine) is linked at Asn826.

Belongs to the peptidase M1 family. In terms of assembly, (Microbial infection) Interacts with CCoV spike glycoprotein. Homodimer. Interacts with SLC6A19. Zn(2+) is required as a cofactor. Sulfated. In terms of processing, N- and O-glycosylated. Post-translationally, may undergo proteolysis and give rise to a soluble form.

Its subcellular location is the cell membrane. The catalysed reaction is Release of an N-terminal amino acid, Xaa-|-Yaa- from a peptide, amide or arylamide. Xaa is preferably Ala, but may be most amino acids including Pro (slow action). When a terminal hydrophobic residue is followed by a prolyl residue, the two may be released as an intact Xaa-Pro dipeptide.. Its function is as follows. Broad specificity aminopeptidase which plays a role in the final digestion of peptides generated from hydrolysis of proteins by gastric and pancreatic proteases. Also involved in the processing of various peptides including peptide hormones, such as angiotensin III and IV, neuropeptides, and chemokines. May also be involved the cleavage of peptides bound to major histocompatibility complex class II molecules of antigen presenting cells. May have a role in angiogenesis and promote cholesterol crystallization. May have a role in amino acid transport by acting as binding partner of amino acid transporter SLC6A19 and regulating its activity. (Microbial infection) Probable receptor for canine coronavirus (CCoV). This chain is Aminopeptidase N (ANPEP), found in Canis lupus familiaris (Dog).